A 96-amino-acid polypeptide reads, in one-letter code: Co-chaperonin GroES (96 aa).

Belongs to the GroES chaperonin family. In terms of assembly, heptamer of 7 subunits arranged in a ring. Interacts with the chaperonin GroEL.

It localises to the cytoplasm. In terms of biological role, together with the chaperonin GroEL, plays an essential role in assisting protein folding. The GroEL-GroES system forms a nano-cage that allows encapsulation of the non-native substrate proteins and provides a physical environment optimized to promote and accelerate protein folding. GroES binds to the apical surface of the GroEL ring, thereby capping the opening of the GroEL channel. This Haemophilus influenzae (strain PittGG) protein is Co-chaperonin GroES.